Consider the following 84-residue polypeptide: uncharacterized protein (84 aa).

The protein belongs to the csb family.

This is an uncharacterized protein from Dictyostelium discoideum (Social amoeba).